The sequence spans 252 residues: Serine/threonine phosphatase stp (252 aa).

A compositionally biased stretch (basic and acidic residues) spans 1–18 (MHAEFRTDRGRIRHHNED). The interval 1–23 (MHAEFRTDRGRIRHHNEDNGGVF) is disordered. One can recognise a PPM-type phosphatase domain in the interval 2–242 (HAEFRTDRGR…DNITVLLVER (241 aa)). Mn(2+) is bound by residues Asp36, Gly37, Asp194, and Asp233.

This sequence belongs to the PP2C family. Mn(2+) serves as cofactor.

The protein resides in the cytoplasm. It localises to the membrane. It catalyses the reaction O-phospho-L-seryl-[protein] + H2O = L-seryl-[protein] + phosphate. The catalysed reaction is O-phospho-L-threonyl-[protein] + H2O = L-threonyl-[protein] + phosphate. Activity not affected by inhibitors of phosphatases of the PPP family such as okadaic acid and cypermethrin, or by inhibitors of phosphatases of the PTP family such as sodium orthovanadate. Its function is as follows. Protein phosphatase that dephosphorylates EF-Tu. In Listeria monocytogenes serovar 1/2a (strain ATCC BAA-679 / EGD-e), this protein is Serine/threonine phosphatase stp (stp).